The sequence spans 784 residues: Homeobox-leucine zipper protein ROC2 (784 aa).

Residues 60 to 113 (AESGDNMIRSRASDPLGGDEFESKSGSENVDGVSVDDQDPNQRPRKKRYHRHTQ) are disordered. Basic residues predominate over residues 102-113 (RPRKKRYHRHTQ). The segment at residues 104-163 (RKKRYHRHTQHQIQEMEAFFKECPHPDDKQRKELSRELGLEPLQVKFWFQNKRTQMKNQH) is a DNA-binding region (homeobox). A coiled-coil region spans residues 158–234 (QMKNQHERHE…DRISAIAAKY (77 aa)). Residues 286–523 (SEVDKPMIVE…LDRQCERLAS (238 aa)) form the START domain.

Belongs to the HD-ZIP homeobox family. Class IV subfamily.

The protein localises to the nucleus. Functionally, probable transcription factor. The sequence is that of Homeobox-leucine zipper protein ROC2 (ROC2) from Oryza sativa subsp. japonica (Rice).